A 568-amino-acid polypeptide reads, in one-letter code: SLAIN motif-containing protein 1 (568 aa).

Disordered stretches follow at residues 1–22, 59–92, 139–162, 235–256, and 291–403; these read MMAEQVKCASAGVSSGAGSGPV, LLLLPPPPPAAPPPAGLQPLGPRSPPAATATAAA, GGGPEPGGAGTPPGAAAAPPSPPP, YTSRGSPLSPQSSIDSELSTSE, and STSA…LRRS. The stretch at 21–56 forms a coiled coil; it reads PVVNAELEVKKLQELVRKLEKQNEQLRSRAASAAAA. A compositionally biased stretch (pro residues) spans 62 to 74; it reads LPPPPPAAPPPAG. Residues 75-92 show a composition bias toward low complexity; sequence LQPLGPRSPPAATATAAA. Gly residues predominate over residues 139–149; the sequence is GGGPEPGGAGT. A compositionally biased stretch (polar residues) spans 235-245; that stretch reads YTSRGSPLSPQ. S243 bears the Phosphoserine mark. 2 stretches are compositionally biased toward low complexity: residues 246-255 and 291-307; these read SSIDSELSTS and STSASVSRHSSSVSLSS. A compositionally biased stretch (acidic residues) spans 316–329; the sequence is QEYDQYSLEDEEEF. Positions 366 to 384 are enriched in low complexity; sequence SSQYFPSNNYQQQQYYSPQ. Positions 385 to 395 are enriched in polar residues; it reads AQTPDQQPNRT. An asymmetric dimethylarginine mark is found at R471 and R543.

This sequence belongs to the SLAIN motif-containing family. In terms of assembly, interacts with MAPRE1, MAPRE2, MAPRE3 and CKAP5. Interacts with ZDHHC17 (via ANK repeats). Expressed in embryonic stem cells. Expressed in brain.

It localises to the cytoplasm. The protein localises to the cytoskeleton. Its function is as follows. Microtubule plus-end tracking protein that might be involved in the regulation of cytoplasmic microtubule dynamics, microtubule organization and microtubule elongation. This chain is SLAIN motif-containing protein 1 (SLAIN1), found in Homo sapiens (Human).